Reading from the N-terminus, the 241-residue chain is Orotidine 5'-phosphate decarboxylase (241 aa).

Substrate contacts are provided by residues aspartate 15, lysine 37, 64–73 (DLKYHDIPNT), threonine 126, arginine 187, glutamine 196, glycine 216, and arginine 217. Lysine 66 acts as the Proton donor in catalysis.

This sequence belongs to the OMP decarboxylase family. Type 1 subfamily. Homodimer.

The catalysed reaction is orotidine 5'-phosphate + H(+) = UMP + CO2. Its pathway is pyrimidine metabolism; UMP biosynthesis via de novo pathway; UMP from orotate: step 2/2. In terms of biological role, catalyzes the decarboxylation of orotidine 5'-monophosphate (OMP) to uridine 5'-monophosphate (UMP). This is Orotidine 5'-phosphate decarboxylase from Geotalea uraniireducens (strain Rf4) (Geobacter uraniireducens).